Reading from the N-terminus, the 92-residue chain is MQVNEYFDGNVTSIAFENGEGRATSGVMLVGDYEFGTSEKELMKIVSGKLEAKLPGEPGFRAYPAGSEFRIDANQKFQVRVIEPTAYLCFYS.

It belongs to the nucleoside phosphorylase PpnP family.

The enzyme catalyses a purine D-ribonucleoside + phosphate = a purine nucleobase + alpha-D-ribose 1-phosphate. It catalyses the reaction adenosine + phosphate = alpha-D-ribose 1-phosphate + adenine. The catalysed reaction is cytidine + phosphate = cytosine + alpha-D-ribose 1-phosphate. It carries out the reaction guanosine + phosphate = alpha-D-ribose 1-phosphate + guanine. The enzyme catalyses inosine + phosphate = alpha-D-ribose 1-phosphate + hypoxanthine. It catalyses the reaction thymidine + phosphate = 2-deoxy-alpha-D-ribose 1-phosphate + thymine. The catalysed reaction is uridine + phosphate = alpha-D-ribose 1-phosphate + uracil. It carries out the reaction xanthosine + phosphate = alpha-D-ribose 1-phosphate + xanthine. Catalyzes the phosphorolysis of diverse nucleosides, yielding D-ribose 1-phosphate and the respective free bases. Can use uridine, adenosine, guanosine, cytidine, thymidine, inosine and xanthosine as substrates. Also catalyzes the reverse reactions. This Rhodopirellula baltica (strain DSM 10527 / NCIMB 13988 / SH1) protein is Pyrimidine/purine nucleoside phosphorylase.